The following is a 342-amino-acid chain: N-acetyl-gamma-glutamyl-phosphate reductase (342 aa).

The active site involves Cys-149.

It belongs to the NAGSA dehydrogenase family. Type 1 subfamily.

It localises to the cytoplasm. The enzyme catalyses N-acetyl-L-glutamate 5-semialdehyde + phosphate + NADP(+) = N-acetyl-L-glutamyl 5-phosphate + NADPH + H(+). It participates in amino-acid biosynthesis; L-arginine biosynthesis; N(2)-acetyl-L-ornithine from L-glutamate: step 3/4. In terms of biological role, catalyzes the NADPH-dependent reduction of N-acetyl-5-glutamyl phosphate to yield N-acetyl-L-glutamate 5-semialdehyde. This Thiobacillus denitrificans (strain ATCC 25259 / T1) protein is N-acetyl-gamma-glutamyl-phosphate reductase.